The following is a 77-amino-acid chain: Early E3 9.0 kDa glycoprotein (77 aa).

Residue Asn-7 is glycosylated (N-linked (GlcNAc...) asparagine; by host). A helical transmembrane segment spans residues 27 to 47; the sequence is ITILIVIGILILSVILYFIFC.

This sequence belongs to the adenoviridae E3A-1 family.

Its subcellular location is the host nucleus membrane. The chain is Early E3 9.0 kDa glycoprotein from Human adenovirus B serotype 3 (HAdV-3).